Consider the following 330-residue polypeptide: GTPase Obg (330 aa).

One can recognise an Obg domain in the interval methionine 1–leucine 159. The region spanning alanine 160–glycine 328 is the OBG-type G domain. ATP contacts are provided by residues glycine 166–serine 173, phenylalanine 191–valine 195, aspartate 213–glycine 216, asparagine 280–glutamate 283, and serine 309–alanine 311. The Mg(2+) site is built by serine 173 and threonine 193.

This sequence belongs to the TRAFAC class OBG-HflX-like GTPase superfamily. OBG GTPase family. In terms of assembly, monomer. The cofactor is Mg(2+).

The protein localises to the cytoplasm. An essential GTPase which binds GTP, GDP and possibly (p)ppGpp with moderate affinity, with high nucleotide exchange rates and a fairly low GTP hydrolysis rate. Plays a role in control of the cell cycle, stress response, ribosome biogenesis and in those bacteria that undergo differentiation, in morphogenesis control. This is GTPase Obg from Parasynechococcus marenigrum (strain WH8102).